A 102-amino-acid polypeptide reads, in one-letter code: Cuticle protein 10.9 (102 aa).

Residue Gln-1 is modified to Pyrrolidone carboxylic acid. A disordered region spans residues 1–45 (QLAEQYPPHPYSFSYDATDETGARISTSESGDESNSKTGSYSYQT). Residues 8–74 (PHPYSFSYDA…SIDTNEPGTK (67 aa)) enclose the Chitin-binding type R&amp;R domain. The span at 36–45 (SKTGSYSYQT) shows a compositional bias: polar residues.

Component of the cuticle of the tick. Binds chitin. The polypeptide is Cuticle protein 10.9 (Ixodes ricinus (Common tick)).